We begin with the raw amino-acid sequence, 470 residues long: TNF receptor-associated factor 4 (470 aa).

Residues 18 to 58 (CPLCGKPMREPVQVSTCGHRFCDTCLQEFLSEGVFKCPEDQ) form an RING-type zinc finger. TRAF-type zinc fingers lie at residues 101–154 (GHLN…EAYE), 155–208 (SHEG…DTIQ), and 209–267 (SHQY…LAMG). Residue Lys263 forms a Glycyl lysine isopeptide (Lys-Gly) (interchain with G-Cter in ubiquitin) linkage. Residues 277-310 (HLAMMCALVSRQRQELQELRRELEELSIGSDGVL) adopt a coiled-coil conformation. The region spanning 307–462 (DGVLIWKIGS…DDAVFIRASV (156 aa)) is the MATH domain. At Ser426 the chain carries Phosphoserine.

Belongs to the TNF receptor-associated factor family. B subfamily. Homotrimer. Interacts with LTBR/TNFRSF3, NGFR/TNFRSF16, RPS6KB1 and TGFB1I1. Interacts with SMURF1. Interacts (via TRAF domain) with MAP3K4 (via kinase domain). Interacts with NCF1, TICAM1, IRAK1 and TRAF6, and is probably part of a complex containing TRAF4, NCF1, TICAM1, IRAK1 and TRAF6. Interacts (via MATH domain) with GP6 and GP1BB. Interacts with EGFR (via C-terminal region); this interaction promotes the formation of EGFR asymmetric dimers. Interacts with PKM; this interaction promotes PKM kinase activity. In terms of processing, polyubiquitinated, leading to its proteasomal degradation. Ubiquitinated at Lys-263 by the SCF(FBXL2) complex, leading to its degradation by the proteasome. As to expression, predominantly expressed in brain. Preferentially expressed by postmitotic undifferentiated neurons in developing central (CNS) and peripheral (PNS) nervous system, and in nervous tissues of sensory organs. In the embryo, protein expression was shown in brain, thymus, salivary glands and intestine. In the adult, protein expression is restricted to the brain (hippocampus and olfactory bulb).

It localises to the cytoplasm. It is found in the nucleus. The protein resides in the perinuclear region. Its subcellular location is the cell junction. The protein localises to the tight junction. It localises to the cell membrane. It is found in the cytoskeleton. The enzyme catalyses S-ubiquitinyl-[E2 ubiquitin-conjugating enzyme]-L-cysteine + [acceptor protein]-L-lysine = [E2 ubiquitin-conjugating enzyme]-L-cysteine + N(6)-ubiquitinyl-[acceptor protein]-L-lysine.. Its pathway is protein degradation; proteasomal ubiquitin-dependent pathway. In terms of biological role, adapter protein with E3 ligase activity that is involved in many diverse biological processes including cell proliferation, migration, differentiation, DNA repair, platelet activation or apoptosis. Promotes EGFR-mediated signaling by facilitating the dimerization of EGFR and downstream AKT activation thereby promoting cell proliferation. Ubiquitinates SMURF2 through 'Lys-48'-linked ubiquitin chain leading to SMURF2 degradation through the proteasome and subsequently osteogenic differentiation. Promotes 'Lys-63'-mediated ubiquitination of CHK1 which in turn activates cell cycle arrest and activation of DNA repair. In addition, promotes an atypical 'Lys-29'-linked ubiquitination at the C-terminal end of IRS1 which is crucial for insulin-like growth factor (IGF) signal transduction. Regulates activation of NF-kappa-B in response to signaling through Toll-like receptors. Required for normal skeleton development, and for normal development of the respiratory tract. Required for activation of RPS6KB1 in response to TNF signaling. Modulates TRAF6 functions. Inhibits adipogenic differentiation by activating pyruvate kinase PKM activity and subsequently the beta-catenin signaling pathway. The chain is TNF receptor-associated factor 4 (Traf4) from Mus musculus (Mouse).